The chain runs to 66 residues: Large ribosomal subunit protein uL29 (66 aa).

Belongs to the universal ribosomal protein uL29 family.

This chain is Large ribosomal subunit protein uL29, found in Lysinibacillus sphaericus (strain C3-41).